Consider the following 306-residue polypeptide: UDP-3-O-acyl-N-acetylglucosamine deacetylase (306 aa).

3 residues coordinate Zn(2+): histidine 79, histidine 238, and aspartate 242. Catalysis depends on histidine 265, which acts as the Proton donor.

Belongs to the LpxC family. Requires Zn(2+) as cofactor.

The enzyme catalyses a UDP-3-O-[(3R)-3-hydroxyacyl]-N-acetyl-alpha-D-glucosamine + H2O = a UDP-3-O-[(3R)-3-hydroxyacyl]-alpha-D-glucosamine + acetate. It participates in glycolipid biosynthesis; lipid IV(A) biosynthesis; lipid IV(A) from (3R)-3-hydroxytetradecanoyl-[acyl-carrier-protein] and UDP-N-acetyl-alpha-D-glucosamine: step 2/6. In terms of biological role, catalyzes the hydrolysis of UDP-3-O-myristoyl-N-acetylglucosamine to form UDP-3-O-myristoylglucosamine and acetate, the committed step in lipid A biosynthesis. The chain is UDP-3-O-acyl-N-acetylglucosamine deacetylase from Shewanella sediminis (strain HAW-EB3).